Reading from the N-terminus, the 2275-residue chain is Serine-rich adhesin for platelets (2275 aa).

Residues 1-89 form the signal peptide; it reads MSKRQKEFHD…VNMLHDQQAF (89 aa). Positions 90-264 are serine-rich repeat region 1, SRR1; that stretch reads AASDAPLTSE…TANTITVNKD (175 aa). The span at 100-111 shows a compositional bias: polar residues; the sequence is LNTQSETVGNQN. Disordered stretches follow at residues 100-229 and 751-2247; these read LNTQ…STST and NSMS…GLLG. The segment covering 112-128 has biased composition (low complexity); sequence STTIEASTSTADSTSVT. The segment covering 129–140 has biased composition (polar residues); the sequence is KNSSSVQTSNSD. Over residues 150-229 the composition is skewed to low complexity; the sequence is VTSTTNSTSN…NKTSTTSTST (80 aa). A non-repeat region (NRR) region spans residues 265 to 751; the sequence is NLKQYMTTSG…TTFKYEVTRN (487 aa). 2 stretches are compositionally biased toward low complexity: residues 752–1392 and 1402–2218; these read SMSD…LSLS and SNSA…ATSE. Residues 752-2236 are serine-rich repeat region 2, SRR2; it reads SMSDSVSTSG…AQSEKRLPDT (1485 aa). The LPXTG sorting signal signature appears at 2233–2237; sequence LPDTG. Thr2236 bears the Pentaglycyl murein peptidoglycan amidated threonine mark. Positions 2237 to 2275 are cleaved as a propeptide — removed by sortase; that stretch reads GDSIKQNGLLGGVMTLLVGLGLMKRKKKKDENDQDDSQA.

It belongs to the serine-rich repeat protein (SRRP) family. As to quaternary structure, interacts with human gp-340 (DMBT1). Post-translationally, proteolytically cleaved by a metalloprotease. Glycosylated. It is probable that most of the Ser residues in SSR1 and SSR2 are O-GlcNAcylated. Sequential glycosylation by sugar transferases are able to generate complex sugar polymorphisms.

Its subcellular location is the secreted. It localises to the cell wall. Functionally, mediates binding to human platelets, possibly through a receptor-ligand interaction. Probably associated with virulence in endovascular infection. Interacts with host (human) gp-340 via the non-repeat region (NRR or binding region). Binding is inhibited by N-acetylneuraminic acid (NeuAc). This chain is Serine-rich adhesin for platelets (sraP), found in Staphylococcus aureus (strain MW2).